Here is a 177-residue protein sequence, read N- to C-terminus: Alkyl hydroperoxide reductase AhpD (177 aa).

The active-site Proton donor is Cys-133. A disulfide bond links Cys-133 and Cys-136. The active-site Cysteine sulfenic acid (-SOH) intermediate is the Cys-136.

The protein belongs to the AhpD family.

The enzyme catalyses N(6)-[(R)-dihydrolipoyl]-L-lysyl-[lipoyl-carrier protein] + a hydroperoxide = N(6)-[(R)-lipoyl]-L-lysyl-[lipoyl-carrier protein] + an alcohol + H2O. Functionally, antioxidant protein with alkyl hydroperoxidase activity. Required for the reduction of the AhpC active site cysteine residues and for the regeneration of the AhpC enzyme activity. This is Alkyl hydroperoxide reductase AhpD from Coxiella burnetii (strain CbuG_Q212) (Coxiella burnetii (strain Q212)).